The sequence spans 143 residues: Transcription antitermination protein NusB (143 aa).

It belongs to the NusB family.

In terms of biological role, involved in transcription antitermination. Required for transcription of ribosomal RNA (rRNA) genes. Binds specifically to the boxA antiterminator sequence of the ribosomal RNA (rrn) operons. The sequence is that of Transcription antitermination protein NusB from Clostridium botulinum (strain Kyoto / Type A2).